A 333-amino-acid chain; its full sequence is Phosphoribosylformylglycinamidine cyclo-ligase (333 aa).

Belongs to the AIR synthase family.

It is found in the cytoplasm. It catalyses the reaction 2-formamido-N(1)-(5-O-phospho-beta-D-ribosyl)acetamidine + ATP = 5-amino-1-(5-phospho-beta-D-ribosyl)imidazole + ADP + phosphate + H(+). The protein operates within purine metabolism; IMP biosynthesis via de novo pathway; 5-amino-1-(5-phospho-D-ribosyl)imidazole from N(2)-formyl-N(1)-(5-phospho-D-ribosyl)glycinamide: step 2/2. The protein is Phosphoribosylformylglycinamidine cyclo-ligase of Methanosarcina acetivorans (strain ATCC 35395 / DSM 2834 / JCM 12185 / C2A).